The sequence spans 321 residues: Non-canonical heme oxygenase HOZ, chloroplastic (321 aa).

The N-terminal 45 residues, 1–45 (MKSLVAHFSTPLITARLVPRCIIHRASISAVSFSTVRRRFSPLTM), are a transit peptide targeting the chloroplast. A dimerization region spans residues 96–116 (CGMLSTFSQKYEGYPSGSMVD). Ser130, Val134, and His135 together coordinate heme b. Dimerization regions lie at residues 144 to 166 (KCSLLIARDPEDRTGLRITLHGD) and 205 to 208 (KVVR).

In terms of assembly, homodimer. Binds to heme in the interdimer interface; the heme iron is coordinated by a fixed water molecule.

The protein resides in the plastid. It is found in the chloroplast. Its function is as follows. Dimeric beta-barrel protein binding to heme and catalyzing its degradation to produce biliverdin. May function in the tetrapyrrole biosynthetic pathway. In Arabidopsis thaliana (Mouse-ear cress), this protein is Non-canonical heme oxygenase HOZ, chloroplastic.